The sequence spans 96 residues: (4S)-4-hydroxy-5-phosphonooxypentane-2,3-dione isomerase (96 aa).

The 90-residue stretch at 2-91 (HVTLVEINVH…MTGPRTKKVF (90 aa)) folds into the ABM domain.

This sequence belongs to the LsrG family. Homodimer.

The protein resides in the cytoplasm. The catalysed reaction is (2S)-2-hydroxy-3,4-dioxopentyl phosphate = 3-hydroxy-2,4-dioxopentyl phosphate. Functionally, involved in the degradation of phospho-AI-2, thereby terminating induction of the lsr operon and closing the AI-2 signaling cycle. Catalyzes the conversion of (4S)-4-hydroxy-5-phosphonooxypentane-2,3-dione (P-DPD) to 3-hydroxy-5-phosphonooxypentane-2,4-dione (P-HPD). The sequence is that of (4S)-4-hydroxy-5-phosphonooxypentane-2,3-dione isomerase from Salmonella choleraesuis (strain SC-B67).